The chain runs to 986 residues: Epidermin biosynthesis protein EpiB (986 aa).

It to B.subtilis SpaB and L.lactis NisB.

Its subcellular location is the cell membrane. In terms of biological role, involved in the post-translational modification of the lantibiotic epidermin. The chain is Epidermin biosynthesis protein EpiB (epiB) from Staphylococcus epidermidis.